Consider the following 260-residue polypeptide: Ribosomal RNA small subunit methyltransferase G (260 aa).

Residues 1-45 form a disordered region; sequence MKQRGPAGGRSSSPKPSAPGSGAGEGPDGRSAPASQKINKASAND. The segment covering 9–20 has biased composition (low complexity); that stretch reads GRSSSPKPSAPG. Polar residues predominate over residues 33 to 45; it reads PASQKINKASAND. S-adenosyl-L-methionine contacts are provided by Gly123, Phe128, and Arg193.

This sequence belongs to the methyltransferase superfamily. RNA methyltransferase RsmG family.

It localises to the cytoplasm. The enzyme catalyses guanosine(527) in 16S rRNA + S-adenosyl-L-methionine = N(7)-methylguanosine(527) in 16S rRNA + S-adenosyl-L-homocysteine. Specifically methylates the N7 position of guanine in position 527 of 16S rRNA. In Bradyrhizobium diazoefficiens (strain JCM 10833 / BCRC 13528 / IAM 13628 / NBRC 14792 / USDA 110), this protein is Ribosomal RNA small subunit methyltransferase G.